The following is a 3996-amino-acid chain: Probable E3 ubiquitin-protein ligase HECTD4 (3996 aa).

A helical membrane pass occupies residues 282–302; that stretch reads TCIIRCILVVFQVVFKFFFSP. Residues 1494–1510 show a composition bias toward polar residues; that stretch reads PTASEPDTTLTKTSPKN. 2 disordered regions span residues 1494 to 1524 and 1616 to 1637; these read PTASEPDTTLTKTSPKNSLKGDKDPGEESEA and PETVSGLSTGDKKKTAQTSICR. At Thr-2080 the chain carries Phosphothreonine. 4 disordered regions span residues 2219–2245, 2859–2919, 3017–3053, and 3327–3403; these read FITSGPDPHPPPIADDESDDDDDDDIP, TSAT…PTVL, EDTKKPKDKAEGGDGKVEPEKTLAFPGTDSMEVSTSS, and FDKS…QEVP. Over residues 2232–2245 the composition is skewed to acidic residues; sequence ADDESDDDDDDDIP. A compositionally biased stretch (low complexity) spans 2866-2887; it reads LSDSSSSSSSSPGQTPQSPSLL. A compositionally biased stretch (basic residues) spans 2888–2897; sequence SKRKKVKMKR. Composition is skewed to basic and acidic residues over residues 3017-3037, 3327-3341, and 3370-3403; these read EDTKKPKDKAEGGDGKVEPEK, FDKSKYSKAGKEQHP, and LSEKKPTVKPKSPEKSKPDEKDPEKSPTKKQEVP. The HECT domain maps to 3627 to 3996; that stretch reads SGGDPTYAFN…IHYREDPLSG (370 aa). Cys-3964 functions as the Glycyl thioester intermediate in the catalytic mechanism.

Its subcellular location is the membrane. It catalyses the reaction S-ubiquitinyl-[E2 ubiquitin-conjugating enzyme]-L-cysteine + [acceptor protein]-L-lysine = [E2 ubiquitin-conjugating enzyme]-L-cysteine + N(6)-ubiquitinyl-[acceptor protein]-L-lysine.. The protein operates within protein modification; protein ubiquitination. Its function is as follows. E3 ubiquitin-protein ligase which accepts ubiquitin from an E2 ubiquitin-conjugating enzyme in the form of a thioester and then directly transfers the ubiquitin to targeted substrates. The protein is Probable E3 ubiquitin-protein ligase HECTD4 (HECTD4) of Homo sapiens (Human).